A 605-amino-acid chain; its full sequence is Translation factor GUF1 homolog, chloroplastic (605 aa).

The tr-type G domain occupies 7-189; the sequence is RRIRNFSIIA…RIVQVVPPPR (183 aa). GTP is bound by residues 16–23, 82–86, and 136–139; these read AHIDHGKS, DTPGH, and NKID.

This sequence belongs to the TRAFAC class translation factor GTPase superfamily. Classic translation factor GTPase family. LepA subfamily.

It localises to the plastid. Its subcellular location is the chloroplast. It carries out the reaction GTP + H2O = GDP + phosphate + H(+). Functionally, promotes chloroplast protein synthesis. May act as a fidelity factor of the translation reaction, by catalyzing a one-codon backward translocation of tRNAs on improperly translocated ribosomes. The polypeptide is Translation factor GUF1 homolog, chloroplastic (Ostreococcus lucimarinus (strain CCE9901)).